The primary structure comprises 392 residues: Phosphoglycerate kinase (392 aa).

Substrate contacts are provided by residues 21-23 (DLN), Arg-36, 59-62 (HLGR), Arg-114, and Arg-147. Residues Lys-198, Glu-320, and 346-349 (GGDT) each bind ATP.

Belongs to the phosphoglycerate kinase family. Monomer.

It is found in the cytoplasm. It catalyses the reaction (2R)-3-phosphoglycerate + ATP = (2R)-3-phospho-glyceroyl phosphate + ADP. It functions in the pathway carbohydrate degradation; glycolysis; pyruvate from D-glyceraldehyde 3-phosphate: step 2/5. The sequence is that of Phosphoglycerate kinase from Nitrosomonas europaea (strain ATCC 19718 / CIP 103999 / KCTC 2705 / NBRC 14298).